Consider the following 272-residue polypeptide: uncharacterized protein (272 aa).

Composition is skewed to basic and acidic residues over residues 136-156 and 231-240; these read VRRE…HIDI and GCKESRRNEP. Disordered stretches follow at residues 136 to 157 and 174 to 272; these read VRRE…IDIH and VKPK…WAAF. Polar residues predominate over residues 243-252; it reads DLSQLKKNLP. The segment covering 253–272 has biased composition (low complexity); that stretch reads STAGSGSSKSTGAASGWAAF.

This is an uncharacterized protein from Arabidopsis thaliana (Mouse-ear cress).